Here is a 21-residue protein sequence, read N- to C-terminus: uncharacterized protein (21 aa).

This is an uncharacterized protein from Methanococcus voltae.